Consider the following 287-residue polypeptide: Cell division protein ZipA (287 aa).

Methionine 1 is a topological domain (periplasmic). The helical transmembrane segment at 2 to 22 (EIGLREWLIVIGIIVIAGILF) threads the bilayer. Over 23 to 287 (DGWRRMRGSK…ERRALTQRRG (265 aa)) the chain is Cytoplasmic. Residues 48–140 (DEEETTSAEV…PTQRITEDKD (93 aa)) are disordered. Composition is skewed to basic and acidic residues over residues 64-77 (LDTH…EHDL), 85-104 (REGK…KDEP), and 121-140 (GRDD…EDKD).

Belongs to the ZipA family. Interacts with FtsZ via their C-terminal domains.

It localises to the cell inner membrane. Its function is as follows. Essential cell division protein that stabilizes the FtsZ protofilaments by cross-linking them and that serves as a cytoplasmic membrane anchor for the Z ring. Also required for the recruitment to the septal ring of downstream cell division proteins. The chain is Cell division protein ZipA from Pseudomonas syringae pv. syringae (strain B728a).